Reading from the N-terminus, the 46-residue chain is Protein PsbN (46 aa).

Residues 10 to 30 traverse the membrane as a helical segment; sequence LIITILAVTIAFTAVSLYTAF.

It belongs to the PsbN family.

Its subcellular location is the cellular thylakoid membrane. Its function is as follows. May play a role in photosystem I and II biogenesis. In Acaryochloris marina (strain MBIC 11017), this protein is Protein PsbN.